Here is a 489-residue protein sequence, read N- to C-terminus: Ataxin-10 homolog (489 aa).

It belongs to the ataxin-10 family.

The protein localises to the cytoplasm. Functionally, may play a role in the regulation of cytokinesis. The chain is Ataxin-10 homolog (CTR86) from Debaryomyces hansenii (strain ATCC 36239 / CBS 767 / BCRC 21394 / JCM 1990 / NBRC 0083 / IGC 2968) (Yeast).